The following is a 490-amino-acid chain: Nuclear transcription factor Y subunit beta (490 aa).

The disordered stretch occupies residues 1-48 (MSGNEDFIYDDNSSSSISNQTDGGGGGGSSNNNSGGNANNNNNEGDRE). Residues 30 to 43 (SNNNSGGNANNNNN) are compositionally biased toward low complexity. A DNA-binding region spans residues 53-59 (LPIANII). Positions 80–91 (VQDCVSEFISFI) are subunit association domain (SAD). 2 disordered regions span residues 139–195 (EKNS…QQQQ) and 221–264 (QQQQ…NQQY). Low complexity predominate over residues 181-195 (QQQQQPPQVQQQQQQ). Residues 188-219 (QVQQQQQQQQQQQQQQLQQQQQLQQHQQQQLQ) adopt a coiled-coil conformation. Positions 269-307 (QQQQQQQQQQQQQQQQQQQQQQQQQQQQQQQQQQQQQVQ) form a coiled coil. Disordered regions lie at residues 325–370 (NQQA…QHLQ) and 399–490 (QFSN…PSTS). A compositionally biased stretch (low complexity) spans 399 to 468 (QFSNNNNNNN…GNSLHNSGNS (70 aa)). Polar residues predominate over residues 478 to 490 (PYISTNPEYPSTS).

This sequence belongs to the NFYB/HAP3 subunit family. As to quaternary structure, heterotrimeric transcription factor composed of three components, nfyA, nfyB and nfyC. nfyB and nfyC must interact and dimerize for nfyA association and DNA binding.

It is found in the nucleus. Functionally, component of the NF-Y/HAP transcription factor complex. The NF-Y complex stimulates the transcription of various genes by recognizing and binding to a CCAAT motif in promoters. The polypeptide is Nuclear transcription factor Y subunit beta (nfyB) (Dictyostelium discoideum (Social amoeba)).